A 185-amino-acid polypeptide reads, in one-letter code: UPF0149 protein PFL_5969 (185 aa).

This sequence belongs to the UPF0149 family.

This Pseudomonas fluorescens (strain ATCC BAA-477 / NRRL B-23932 / Pf-5) protein is UPF0149 protein PFL_5969.